The primary structure comprises 950 residues: Protocadherin alpha-13 (950 aa).

Positions M1–G29 are cleaved as a signal peptide. The Extracellular segment spans residues Q30–N697. 6 Cadherin domains span residues S34–F133, P134–F242, Y243–V350, T351–F455, A456–L565, and M581–A678. 2 N-linked (GlcNAc...) asparagine glycosylation sites follow: N257 and N265. N-linked (GlcNAc...) asparagine glycosylation occurs at N548. Residues V698 to Y718 form a helical membrane-spanning segment. Topologically, residues T719–Q950 are cytoplasmic. PXXP repeat units follow at residues P734–P737, P774–P777, P799–P802, P832–P835, P873–P876, and P891–P894. The 6 X 4 AA repeats of P-X-X-P stretch occupies residues P734–P894. Disordered stretches follow at residues P774–Y808 and I827–Q950. The segment covering G787–R800 has biased composition (basic and acidic residues). Residues D909–K923 show a composition bias toward basic and acidic residues.

The protein resides in the cell membrane. Functionally, potential calcium-dependent cell-adhesion protein. May be involved in the establishment and maintenance of specific neuronal connections in the brain. The polypeptide is Protocadherin alpha-13 (PCDHA13) (Pan troglodytes (Chimpanzee)).